A 115-amino-acid polypeptide reads, in one-letter code: Large ribosomal subunit protein bL21 (115 aa).

It belongs to the bacterial ribosomal protein bL21 family. Part of the 50S ribosomal subunit. Contacts protein L20.

In terms of biological role, this protein binds to 23S rRNA in the presence of protein L20. The chain is Large ribosomal subunit protein bL21 from Coxiella burnetii (strain RSA 331 / Henzerling II).